We begin with the raw amino-acid sequence, 264 residues long: Hydroxyethylthiazole kinase (264 aa).

Met-45 lines the substrate pocket. 2 residues coordinate ATP: Arg-121 and Ser-167. Position 194 (Gly-194) interacts with substrate.

This sequence belongs to the Thz kinase family. Mg(2+) serves as cofactor.

It carries out the reaction 5-(2-hydroxyethyl)-4-methylthiazole + ATP = 4-methyl-5-(2-phosphooxyethyl)-thiazole + ADP + H(+). It participates in cofactor biosynthesis; thiamine diphosphate biosynthesis; 4-methyl-5-(2-phosphoethyl)-thiazole from 5-(2-hydroxyethyl)-4-methylthiazole: step 1/1. Catalyzes the phosphorylation of the hydroxyl group of 4-methyl-5-beta-hydroxyethylthiazole (THZ). The chain is Hydroxyethylthiazole kinase from Aliivibrio salmonicida (strain LFI1238) (Vibrio salmonicida (strain LFI1238)).